A 176-amino-acid chain; its full sequence is ATP-dependent protease subunit HslV (176 aa).

Residue Thr2 is part of the active site. Na(+) contacts are provided by Gly157, Cys160, and Thr163.

Belongs to the peptidase T1B family. HslV subfamily. A double ring-shaped homohexamer of HslV is capped on each side by a ring-shaped HslU homohexamer. The assembly of the HslU/HslV complex is dependent on binding of ATP.

Its subcellular location is the cytoplasm. The enzyme catalyses ATP-dependent cleavage of peptide bonds with broad specificity.. Its activity is regulated as follows. Allosterically activated by HslU binding. In terms of biological role, protease subunit of a proteasome-like degradation complex believed to be a general protein degrading machinery. The polypeptide is ATP-dependent protease subunit HslV (Pectobacterium carotovorum subsp. carotovorum (strain PC1)).